The chain runs to 683 residues: Methionine--tRNA ligase (683 aa).

The short motif at 15–25 (PYANGPIHLGH) is the 'HIGH' region element. Residues C146, C149, C159, and C162 each coordinate Zn(2+). The 'KMSKS' region signature appears at 332-336 (KMSKS). K335 is a binding site for ATP. The region spanning 581 to 683 (DFCKVDLRVA…AGAKAGQRVK (103 aa)) is the tRNA-binding domain.

Belongs to the class-I aminoacyl-tRNA synthetase family. MetG type 1 subfamily. As to quaternary structure, homodimer. Zn(2+) serves as cofactor.

It localises to the cytoplasm. It carries out the reaction tRNA(Met) + L-methionine + ATP = L-methionyl-tRNA(Met) + AMP + diphosphate. Functionally, is required not only for elongation of protein synthesis but also for the initiation of all mRNA translation through initiator tRNA(fMet) aminoacylation. In Histophilus somni (strain 2336) (Haemophilus somnus), this protein is Methionine--tRNA ligase.